Reading from the N-terminus, the 269-residue chain is GTP cyclohydrolase FolE2 2 (269 aa).

This sequence belongs to the GTP cyclohydrolase IV family.

It catalyses the reaction GTP + H2O = 7,8-dihydroneopterin 3'-triphosphate + formate + H(+). It functions in the pathway cofactor biosynthesis; 7,8-dihydroneopterin triphosphate biosynthesis; 7,8-dihydroneopterin triphosphate from GTP: step 1/1. Converts GTP to 7,8-dihydroneopterin triphosphate. The sequence is that of GTP cyclohydrolase FolE2 2 from Burkholderia lata (strain ATCC 17760 / DSM 23089 / LMG 22485 / NCIMB 9086 / R18194 / 383).